A 168-amino-acid chain; its full sequence is Putative peroxiredoxin prxA (168 aa).

The region spanning 4–158 is the Thioredoxin domain; that stretch reads LKAGDSFPAD…LEPAKNHLEF (155 aa). The active-site Cysteine sulfenic acid (-SOH) intermediate is the cysteine 61.

It belongs to the peroxiredoxin family. Prx5 subfamily. Homodimer; disulfide-linked, upon oxidation. Interacts with thioredoxin trxA.

The catalysed reaction is a hydroperoxide + [thioredoxin]-dithiol = an alcohol + [thioredoxin]-disulfide + H2O. Functionally, thiol-specific peroxidase that catalyzes the reduction of hydrogen peroxide and organic hydroperoxides to water and alcohols, respectively. Plays a role in cell protection against oxidative stress by detoxifying peroxides and as sensor of hydrogen peroxide-mediated signaling events. Involved in osmoadaptation. This chain is Putative peroxiredoxin prxA, found in Emericella nidulans (strain FGSC A4 / ATCC 38163 / CBS 112.46 / NRRL 194 / M139) (Aspergillus nidulans).